We begin with the raw amino-acid sequence, 106 residues long: BLOC-1-related complex subunit 7 (106 aa).

It belongs to the BORCS7 family. In terms of assembly, component of the BLOC-one-related complex (BORC) which is composed of BLOC1S1, BLOC1S2, BORCS5, BORCS6, BORCS7, BORCS8, KXD1 and SNAPIN.

It localises to the lysosome membrane. Functionally, as part of the BORC complex may play a role in lysosomes movement and localization at the cell periphery. Associated with the cytosolic face of lysosomes, the BORC complex may recruit ARL8B and couple lysosomes to microtubule plus-end-directed kinesin motor. The polypeptide is BLOC-1-related complex subunit 7 (Homo sapiens (Human)).